A 473-amino-acid polypeptide reads, in one-letter code: Phenolic acid decarboxylase (473 aa).

3 residues coordinate Mn(2+): Asn160, His182, and Glu224. Prenylated FMN contacts are provided by residues 160–165 (NVGIYR) and 181–182 (QH). Residue Glu273 is the Proton donor of the active site.

It belongs to the UbiD family. YclC subfamily. The cofactor is prenylated FMN. It depends on Mn(2+) as a cofactor.

It carries out the reaction 4-hydroxybenzoate + H(+) = phenol + CO2. It catalyses the reaction vanillate + H(+) = guaiacol + CO2. Functionally, involved in the non-oxidative decarboxylation and detoxification of phenolic derivatives under both aerobic and anaerobic conditions. Phenolic acid decarboxylase that catalyzes the reversible decarboxylation of 4-hydroxybenzoate and vanillate. Could also catalyze the decarboxylation of salicylate. Is not active on di- and tri-hydroxybenzoate derivatives. The protein is Phenolic acid decarboxylase of Bacillus subtilis (strain 168).